The sequence spans 99 residues: Large ribosomal subunit protein uL23 (99 aa).

The protein belongs to the universal ribosomal protein uL23 family. As to quaternary structure, part of the 50S ribosomal subunit. Contacts protein L29, and trigger factor when it is bound to the ribosome.

Functionally, one of the early assembly proteins it binds 23S rRNA. One of the proteins that surrounds the polypeptide exit tunnel on the outside of the ribosome. Forms the main docking site for trigger factor binding to the ribosome. In Streptococcus suis (strain 98HAH33), this protein is Large ribosomal subunit protein uL23.